The following is a 713-amino-acid chain: TWiK family of potassium channels protein 12 (713 aa).

Over 1–15 the chain is Cytoplasmic; the sequence is MTLFKKIQWFCNLIR. Residues 16-36 form a helical membrane-spanning segment; the sequence is LRSYYKFLLLIAYTAFGAWLF. Asparagine 53, asparagine 77, and asparagine 98 each carry an N-linked (GlcNAc...) asparagine glycan. The segment at residues 112–132 is an intramembrane region (pore-forming); it reads WTWTGAMFYAGQLYTTIGYGY. Residues 142–162 traverse the membrane as a helical segment; that stretch reads ICTIFYALFGIPCFLMYLKIE. The Cytoplasmic portion of the chain corresponds to 163 to 242; the sequence is NAIEWKKDKQ…AEERKKKPFP (80 aa). A helical transmembrane segment spans residues 243–263; sequence IPIAIIMLIIWICFSASMFCI. The pore-forming intramembrane region spans 267 to 287; sequence TWVFSSAVYFFIVSISTVGLG. The helical transmembrane segment at 298–318 threads the bilayer; it reads VFNFLLILVGLALLSMCFELI. Residues 319–713 are Cytoplasmic-facing; sequence TDRVAKWKQK…LSKRDASTMA (395 aa).

This sequence belongs to the two pore domain potassium channel (TC 1.A.1.8) family.

The protein localises to the membrane. The protein is TWiK family of potassium channels protein 12 (twk-12) of Caenorhabditis elegans.